The primary structure comprises 678 residues: Protein CASP (678 aa).

Topologically, residues 1 to 619 (MAANVGSMSQ…LILSNKTART (619 aa)) are cytoplasmic. Coiled coils occupy residues 16 to 40 (DLQQLQRELDAAATVLANRQDESEQ), 67 to 374 (LLKS…TLKS), 427 to 454 (HLTEATAKAVEQKELIARLEQDLSTIQS), and 502 to 556 (LSII…FLQS). Serine 586 is subject to Phosphoserine. A helical; Anchor for type IV membrane protein transmembrane segment spans residues 620–640 (IGFFYTLFLHCLVFLVLYKLA). Topologically, residues 641–678 (WSESVERDCAATCAKKFADHLHKFHESDNGAAAGDLWQ) are lumenal.

Belongs to the CASP family. As to quaternary structure, homodimer; disulfide-linked. Interacts with GOLGA5. Ubiquitously expressed.

The protein localises to the golgi apparatus membrane. In terms of biological role, may be involved in intra-Golgi retrograde transport. The protein is Protein CASP (Cux1) of Mus musculus (Mouse).